The following is a 450-amino-acid chain: Glucose-6-phosphate isomerase (450 aa).

Threonine 39 carries the post-translational modification Phosphothreonine. Catalysis depends on glutamate 291, which acts as the Proton donor. Residues histidine 312 and lysine 426 contribute to the active site.

Belongs to the GPI family.

The protein resides in the cytoplasm. It catalyses the reaction alpha-D-glucose 6-phosphate = beta-D-fructose 6-phosphate. It functions in the pathway carbohydrate biosynthesis; gluconeogenesis. Its pathway is carbohydrate degradation; glycolysis; D-glyceraldehyde 3-phosphate and glycerone phosphate from D-glucose: step 2/4. In terms of biological role, catalyzes the reversible isomerization of glucose-6-phosphate to fructose-6-phosphate. In Bacillus cereus (strain G9842), this protein is Glucose-6-phosphate isomerase.